The sequence spans 651 residues: Mediator of RNA polymerase II transcription subunit 17 (651 aa).

The interval 51-83 (QGSGSEEEEAAGAEGDAQDWAGAGSSADQDDEE) is disordered. Positions 62 to 74 (GAEGDAQDWAGAG) are enriched in low complexity.

The protein belongs to the Mediator complex subunit 17 family. Component of the Mediator complex, which is composed of MED1, MED4, MED6, MED7, MED8, MED9, MED10, MED11, MED12, MED13, MED13L, MED14, MED15, MED16, MED17, MED18, MED19, MED20, MED21, MED22, MED23, MED24, MED25, MED26, MED27, MED29, MED30, MED31, CCNC, CDK8 and CDC2L6/CDK11. The MED12, MED13, CCNC and CDK8 subunits form a distinct module termed the CDK8 module. Mediator containing the CDK8 module is less active than Mediator lacking this module in supporting transcriptional activation. Individual preparations of the Mediator complex lacking one or more distinct subunits have been variously termed ARC, CRSP, DRIP, PC2, SMCC and TRAP. Interacts with GATA1, PPARG and STAT2.

Its subcellular location is the nucleus. Its function is as follows. Component of the Mediator complex, a coactivator involved in the regulated transcription of nearly all RNA polymerase II-dependent genes. Mediator functions as a bridge to convey information from gene-specific regulatory proteins to the basal RNA polymerase II transcription machinery. Mediator is recruited to promoters by direct interactions with regulatory proteins and serves as a scaffold for the assembly of a functional preinitiation complex with RNA polymerase II and the general transcription factors. This Bos taurus (Bovine) protein is Mediator of RNA polymerase II transcription subunit 17 (MED17).